A 458-amino-acid chain; its full sequence is Methionine aminopeptidase 2-2 (458 aa).

A compositionally biased stretch (basic and acidic residues) spans 1 to 14 (MGSKTPERDGHKGQ). A disordered region spans residues 1–93 (MGSKTPERDG…QSSPPRVPLS (93 aa)). The span at 67–82 (QKKKRKSKKKGKKKAA) shows a compositional bias: basic residues. Histidine 209 contributes to the substrate binding site. Aspartate 230, aspartate 241, and histidine 310 together coordinate a divalent metal cation. Histidine 318 contacts substrate. Glutamate 343 and glutamate 439 together coordinate a divalent metal cation.

The protein belongs to the peptidase M24A family. Methionine aminopeptidase eukaryotic type 2 subfamily. The cofactor is Co(2+). Requires Zn(2+) as cofactor. Mn(2+) serves as cofactor. Fe(2+) is required as a cofactor.

It localises to the cytoplasm. The enzyme catalyses Release of N-terminal amino acids, preferentially methionine, from peptides and arylamides.. Its function is as follows. Cotranslationally removes the N-terminal methionine from nascent proteins. The N-terminal methionine is often cleaved when the second residue in the primary sequence is small and uncharged (Met-Ala-, Cys, Gly, Pro, Ser, Thr, or Val). This is Methionine aminopeptidase 2-2 from Emericella nidulans (strain FGSC A4 / ATCC 38163 / CBS 112.46 / NRRL 194 / M139) (Aspergillus nidulans).